The primary structure comprises 177 residues: Large ribosomal subunit protein uL6 (177 aa).

It belongs to the universal ribosomal protein uL6 family. In terms of assembly, part of the 50S ribosomal subunit.

In terms of biological role, this protein binds to the 23S rRNA, and is important in its secondary structure. It is located near the subunit interface in the base of the L7/L12 stalk, and near the tRNA binding site of the peptidyltransferase center. The sequence is that of Large ribosomal subunit protein uL6 from Rhodopseudomonas palustris (strain BisB18).